The chain runs to 213 residues: Phosphatidylserine decarboxylase proenzyme (213 aa).

The active-site Schiff-base intermediate with substrate; via pyruvic acid is S180. S180 carries the post-translational modification Pyruvic acid (Ser); by autocatalysis.

The protein belongs to the phosphatidylserine decarboxylase family. PSD-A subfamily. Heterodimer of a large membrane-associated beta subunit and a small pyruvoyl-containing alpha subunit. Pyruvate serves as cofactor. Post-translationally, is synthesized initially as an inactive proenzyme. Formation of the active enzyme involves a self-maturation process in which the active site pyruvoyl group is generated from an internal serine residue via an autocatalytic post-translational modification. Two non-identical subunits are generated from the proenzyme in this reaction, and the pyruvate is formed at the N-terminus of the alpha chain, which is derived from the carboxyl end of the proenzyme. The post-translation cleavage follows an unusual pathway, termed non-hydrolytic serinolysis, in which the side chain hydroxyl group of the serine supplies its oxygen atom to form the C-terminus of the beta chain, while the remainder of the serine residue undergoes an oxidative deamination to produce ammonia and the pyruvoyl prosthetic group on the alpha chain.

It is found in the cell membrane. The enzyme catalyses a 1,2-diacyl-sn-glycero-3-phospho-L-serine + H(+) = a 1,2-diacyl-sn-glycero-3-phosphoethanolamine + CO2. Its pathway is phospholipid metabolism; phosphatidylethanolamine biosynthesis; phosphatidylethanolamine from CDP-diacylglycerol: step 2/2. In terms of biological role, catalyzes the formation of phosphatidylethanolamine (PtdEtn) from phosphatidylserine (PtdSer). The polypeptide is Phosphatidylserine decarboxylase proenzyme (Carboxydothermus hydrogenoformans (strain ATCC BAA-161 / DSM 6008 / Z-2901)).